A 186-amino-acid polypeptide reads, in one-letter code: MASVSYQKPTSTTVGKQMIFTGPDYIKDYLPKIHQHTSYVGEQHLALEKTGDLRYLWRPASNRSLPAKYKHEYVSEIGWRIPQYNFINKSRLGSGFHIKYEELSQASLDSITHRYQNPWQPKPHVLDMQGKQSRASFAWHMSAFEDTDQRNSKWAILVRQCKSSLPRASKPPKLPKLPKKEKKRKH.

Residues 163–186 (SSLPRASKPPKLPKLPKKEKKRKH) form a disordered region. A compositionally biased stretch (basic residues) spans 176-186 (KLPKKEKKRKH).

In Homo sapiens (Human), this protein is Protein SPMIP2.